Here is a 356-residue protein sequence, read N- to C-terminus: Butyrate kinase (356 aa).

It belongs to the acetokinase family.

The protein localises to the cytoplasm. The enzyme catalyses butanoate + ATP = butanoyl phosphate + ADP. The protein operates within lipid metabolism; butanoate metabolism. Functionally, catalyzes the conversion of butyryl-CoA through butyryl phosphate to butyrate. In Clostridium perfringens (strain ATCC 13124 / DSM 756 / JCM 1290 / NCIMB 6125 / NCTC 8237 / Type A), this protein is Butyrate kinase (buk).